We begin with the raw amino-acid sequence, 271 residues long: 5-deoxy-glucuronate isomerase (271 aa).

The protein belongs to the isomerase IolB family.

The catalysed reaction is 5-deoxy-D-glucuronate = 5-dehydro-2-deoxy-D-gluconate. The protein operates within polyol metabolism; myo-inositol degradation into acetyl-CoA; acetyl-CoA from myo-inositol: step 4/7. Its function is as follows. Involved in the isomerization of 5-deoxy-glucuronate (5DG) to 5-dehydro-2-deoxy-D-gluconate (DKG or 2-deoxy-5-keto-D-gluconate). The protein is 5-deoxy-glucuronate isomerase of Lacticaseibacillus casei (Lactobacillus casei).